Reading from the N-terminus, the 2386-residue chain is Protein kinase rad3 (2386 aa).

The region spanning 1386–1943 is the FAT domain; the sequence is TLGIVSLNCG…LWQLMATIKS (558 aa). The 319-residue stretch at 2052–2370 folds into the PI3K/PI4K catalytic domain; the sequence is FEDEVDIMNS…QIQELIKSAV (319 aa). The interval 2058–2064 is G-loop; the sequence is IMNSLQK. Residues 2227–2235 are catalytic loop; sequence GLGDRHGEN. Positions 2247-2271 are activation loop; it reads HVDFNCLFDKGLTFEKPEKVPFRLT. Positions 2354 to 2386 constitute an FATC domain; that stretch reads IPLSIEGQIQELIKSAVNPKNLVEMYIGWAAYF.

This sequence belongs to the PI3/PI4-kinase family. ATM subfamily. Interacts with crb2 (via BRCT domain). Interacts with chk1.

The protein resides in the nucleus. It carries out the reaction L-seryl-[protein] + ATP = O-phospho-L-seryl-[protein] + ADP + H(+). The catalysed reaction is L-threonyl-[protein] + ATP = O-phospho-L-threonyl-[protein] + ADP + H(+). Its function is as follows. Serine/threonine kinase which activates checkpoint signaling upon genotoxic stresses. Involved in G2 arrest following DNA damage where it phosphorylates chk1. Phosphorylation of 'Thr-73' and 'Ser-80' of checkpoint mediator crb2 promotes its interaction with chk1. It is also involved in the dependence of mitosis on the completion of DNA replication. The polypeptide is Protein kinase rad3 (rad3) (Schizosaccharomyces pombe (strain 972 / ATCC 24843) (Fission yeast)).